The chain runs to 439 residues: Chromosomal replication initiator protein DnaA (439 aa).

Residues 1–72 (MEQFSAFKLL…SKLYDDIRAV (72 aa)) are domain I, interacts with DnaA modulators. Residues 72 to 99 (VRFVNEQDFFINLAKLEEDNRETLYQSS) are domain II. The segment at 100 to 322 (GLSKNFTFKN…GIATKLLFYV (223 aa)) is domain III, AAA+ region. Positions 144, 146, 147, and 148 each coordinate ATP. The tract at residues 323-439 (KTTKQNLINN…LQDIITSLVI (117 aa)) is domain IV, binds dsDNA.

It belongs to the DnaA family. As to quaternary structure, oligomerizes as a right-handed, spiral filament on DNA at oriC.

It is found in the cytoplasm. In terms of biological role, plays an essential role in the initiation and regulation of chromosomal replication. ATP-DnaA binds to the origin of replication (oriC) to initiate formation of the DNA replication initiation complex once per cell cycle. Binds the DnaA box (a 9 base pair repeat at the origin) and separates the double-stranded (ds)DNA. Forms a right-handed helical filament on oriC DNA; dsDNA binds to the exterior of the filament while single-stranded (ss)DNA is stabiized in the filament's interior. The ATP-DnaA-oriC complex binds and stabilizes one strand of the AT-rich DNA unwinding element (DUE), permitting loading of DNA polymerase. After initiation quickly degrades to an ADP-DnaA complex that is not apt for DNA replication. Binds acidic phospholipids. This is Chromosomal replication initiator protein DnaA from Mycoplasma pneumoniae (strain ATCC 29342 / M129 / Subtype 1) (Mycoplasmoides pneumoniae).